The chain runs to 114 residues: Probable 4-amino-4-deoxy-L-arabinose-phosphoundecaprenol flippase subunit ArnE (114 aa).

A run of 3 helical transmembrane segments spans residues 41–61 (MWLWLAIACLGLGLLVWLLVL), 64–84 (MDVGIAYPMLGLNFVLITLVG), and 91–111 (PVDPQHWLGIALILVGVFQLG).

This sequence belongs to the ArnE family. As to quaternary structure, heterodimer of ArnE and ArnF.

It is found in the cell inner membrane. It functions in the pathway bacterial outer membrane biogenesis; lipopolysaccharide biosynthesis. Its function is as follows. Translocates 4-amino-4-deoxy-L-arabinose-phosphoundecaprenol (alpha-L-Ara4N-phosphoundecaprenol) from the cytoplasmic to the periplasmic side of the inner membrane. This is Probable 4-amino-4-deoxy-L-arabinose-phosphoundecaprenol flippase subunit ArnE from Pseudomonas savastanoi pv. phaseolicola (strain 1448A / Race 6) (Pseudomonas syringae pv. phaseolicola (strain 1448A / Race 6)).